The sequence spans 156 residues: CD-NTase/cGAS isopeptidase (156 aa).

Residues 16-156 form the MPN domain; the sequence is LVVIMGHVVT…LITVFKKIES (141 aa). Glu39 serves as the catalytic Proton donor/acceptor. Zn(2+) is bound by residues His101, His103, and Asp114. The JAMM motif signature appears at 101–114; the sequence is HTHPEDRPFPSATD.

This sequence belongs to the peptidase M67B family. Cap3 isopeptidase subfamily. Requires Zn(2+) as cofactor.

Cleavage of conjugated proteins is inhibited by EDTA. Its function is as follows. Metalloprotease priming reversal component of a CBASS system. CBASS (cyclic oligonucleotide-based antiphage signaling system) provides immunity against bacteriophages. The CD-NTase protein (DncV) synthesizes cyclic nucleotides in response to infection; these serve as specific second messenger signals. The signals activate a diverse range of effectors, leading to bacterial cell death and thus abortive phage infection. A type II-A(GA) CBASS system. Reverses the primed state of DncV, the CD-NTase. Cleaves a DncV-GFP (green fluorescent protein) fusion protein precisely at the C-terminus of DncV. Overexpression decreases the efficacy of CBASS protection against phages T2, T4, T5 and T6, blocks formation of DncV-conjugates in vivo, and inhibits in vivo activation of DncV. Antagonism of phage defense upon overexpression is CBASS-system specific, Cap3 from this bacteria only antagonizes its cognate CBASS system and not that of C.freundii, E.coli or E.hormaechei. Functionally, protects E.coli against phage infection. When the CBASS operon (capV-dncV-cap2-cap3) is introduced in E.coli MG1655 there is about 100-fold protection against phages P1 and T2. When the operon is introduced in E.coli MG1655 there is a more than 10(3) decrease in the efficiency of T2 plaque formation. Protects 100-fold against phage T5, offers no protection against T7. When the operon is introduced in E.coli MG1655 it protects against phages T2, T4, T5 and T6. Another paper shows the operon confers protection against phages P1, T2, T5 and T6 but not T4 or lambda. The polypeptide is CD-NTase/cGAS isopeptidase (Vibrio cholerae serotype O1 (strain ATCC 39315 / El Tor Inaba N16961)).